A 543-amino-acid polypeptide reads, in one-letter code: Membrane protein insertase YidC (543 aa).

The chain crosses the membrane as a helical span at residues 7–27 (FLLIGLAMVSFLLWQQWQVDY). Residues 30-61 (QPAQPVESQQTTGSDAPNSNGDVPIATPTNKS) are disordered. The segment covering 35-61 (VESQQTTGSDAPNSNGDVPIATPTNKS) has biased composition (polar residues). 4 consecutive transmembrane segments (helical) span residues 341–361 (FAFL…IILI), 421–441 (GGCF…WVLL), 451–471 (FIFW…PILT), and 499–519 (PVAM…YWLI).

The protein belongs to the OXA1/ALB3/YidC family. Type 1 subfamily. In terms of assembly, interacts with the Sec translocase complex via SecD. Specifically interacts with transmembrane segments of nascent integral membrane proteins during membrane integration.

It localises to the cell inner membrane. Required for the insertion and/or proper folding and/or complex formation of integral membrane proteins into the membrane. Involved in integration of membrane proteins that insert both dependently and independently of the Sec translocase complex, as well as at least some lipoproteins. Aids folding of multispanning membrane proteins. The polypeptide is Membrane protein insertase YidC (Pseudoalteromonas atlantica (strain T6c / ATCC BAA-1087)).